The primary structure comprises 216 residues: MTQDSRFPNLFILDHPLIQHKLSHMRDRDTSTRTFRELLREITLLMGYEITRNLPMTTRRLTTPLVEIDAPVIAGKKLAIVPVLRAGIGMSDGLLELVPSARVGHIGVYRAEDHRPVEYLVRLPDLEDRVFILCDPMVATGYSAVHAVDVLKRRNVAGENIMFLALVAAPEGVQVFQDAHPDVKLYVASLDSHLNEHAYIVPGLGDAGDRLFGTKN.

5-phospho-alpha-D-ribose 1-diphosphate contacts are provided by residues Arg85, Arg110, and 135–143; that span reads DPMVATGYS. Residues Ile200 and 205–207 each bind uracil; that span reads GDA. Asp206 is a binding site for 5-phospho-alpha-D-ribose 1-diphosphate.

The protein belongs to the UPRTase family. Mg(2+) serves as cofactor.

It carries out the reaction UMP + diphosphate = 5-phospho-alpha-D-ribose 1-diphosphate + uracil. It functions in the pathway pyrimidine metabolism; UMP biosynthesis via salvage pathway; UMP from uracil: step 1/1. With respect to regulation, allosterically activated by GTP. In terms of biological role, catalyzes the conversion of uracil and 5-phospho-alpha-D-ribose 1-diphosphate (PRPP) to UMP and diphosphate. The chain is Uracil phosphoribosyltransferase from Paraburkholderia phytofirmans (strain DSM 17436 / LMG 22146 / PsJN) (Burkholderia phytofirmans).